We begin with the raw amino-acid sequence, 476 residues long: Ankyrin repeat, SAM and basic leucine zipper domain-containing protein 1 (476 aa).

Residues Ser-18 and Ser-21 each carry the phosphoserine modification. ANK repeat units follow at residues Glu-46–Ser-75, Tyr-79–Phe-108, Asp-111–Val-145, Arg-149–Thr-178, Asn-182–Leu-211, and Asp-215–Gly-244. The SAM domain maps to Ser-273 to Glu-335.

In terms of assembly, interacts with DDX4, PIWIL1, RANBP9 and TDRD1.

It is found in the cytoplasm. Its function is as follows. Plays a central role during spermatogenesis by repressing transposable elements and preventing their mobilization, which is essential for the germline integrity. Acts via the piRNA metabolic process, which mediates the repression of transposable elements during meiosis by forming complexes composed of piRNAs and Piwi proteins and governs the methylation and subsequent repression of transposons. Its association with pi-bodies suggests a participation in the primary piRNAs metabolic process. Required prior to the pachytene stage to facilitate the production of multiple types of piRNAs, including those associated with repeats involved in the regulation of retrotransposons. May act by mediating protein-protein interactions during germ cell maturation. The sequence is that of Ankyrin repeat, SAM and basic leucine zipper domain-containing protein 1 (ASZ1) from Dasypus novemcinctus (Nine-banded armadillo).